The following is a 209-amino-acid chain: Redox-sensing transcriptional repressor Rex (209 aa).

Residues 16-55 (LYYRFIQNLSLSGKQRVSSAELSEAVKVDSATIRRDFSYF) constitute a DNA-binding region (H-T-H motif). Position 90-95 (90-95 (GVGNLG)) interacts with NAD(+).

Belongs to the transcriptional regulatory Rex family. As to quaternary structure, homodimer.

It is found in the cytoplasm. Functionally, modulates transcription in response to changes in cellular NADH/NAD(+) redox state. The polypeptide is Redox-sensing transcriptional repressor Rex (Bacillus cereus (strain Q1)).